Consider the following 178-residue polypeptide: Putative RING-H2 finger protein ATL19 (178 aa).

A helical transmembrane segment spans residues 11–31 (LISVLGLAVFIGLCILLVVLI). Residues 130 to 172 (CAICLSGYVVNEECRVFPVCRHIYHALCIDAWLKNHLTCPTCR) form an RING-type; atypical zinc finger.

This sequence belongs to the RING-type zinc finger family. ATL subfamily.

The protein localises to the membrane. The enzyme catalyses S-ubiquitinyl-[E2 ubiquitin-conjugating enzyme]-L-cysteine + [acceptor protein]-L-lysine = [E2 ubiquitin-conjugating enzyme]-L-cysteine + N(6)-ubiquitinyl-[acceptor protein]-L-lysine.. It functions in the pathway protein modification; protein ubiquitination. The sequence is that of Putative RING-H2 finger protein ATL19 (ATL19) from Arabidopsis thaliana (Mouse-ear cress).